The primary structure comprises 20 residues: Serum amyloid P-component (20 aa).

Positions 1–20 (ZPIDLMGKVFVFDKELSPBI) constitute a Pentraxin (PTX) domain.

Belongs to the pentraxin family. Homopentamer. Pentraxin (or pentaxin) have a discoid arrangement of 5 non-covalently bound subunits.

Its subcellular location is the secreted. The sequence is that of Serum amyloid P-component from Pleuronectes platessa (European plaice).